The primary structure comprises 229 residues: Sec-independent protein translocase protein TatB (229 aa).

The chain crosses the membrane as a helical span at residues 1–21 (MFDIGFSELLLFGVIALIVLG). Residues 90–131 (EFEHSQSQNLKTSDKAASPANQANNDSAIQNNNEPATFSYAY) form a disordered region. The span at 108–131 (PANQANNDSAIQNNNEPATFSYAY) shows a compositional bias: polar residues.

Belongs to the TatB family. As to quaternary structure, the Tat system comprises two distinct complexes: a TatABC complex, containing multiple copies of TatA, TatB and TatC subunits, and a separate TatA complex, containing only TatA subunits. Substrates initially bind to the TatABC complex, which probably triggers association of the separate TatA complex to form the active translocon.

It localises to the cell inner membrane. In terms of biological role, part of the twin-arginine translocation (Tat) system that transports large folded proteins containing a characteristic twin-arginine motif in their signal peptide across membranes. Together with TatC, TatB is part of a receptor directly interacting with Tat signal peptides. TatB may form an oligomeric binding site that transiently accommodates folded Tat precursor proteins before their translocation. The polypeptide is Sec-independent protein translocase protein TatB (Psychrobacter arcticus (strain DSM 17307 / VKM B-2377 / 273-4)).